A 261-amino-acid chain; its full sequence is Ribosomal RNA small subunit methyltransferase A (261 aa).

Positions 13, 15, 40, 61, 85, and 105 each coordinate S-adenosyl-L-methionine.

It belongs to the class I-like SAM-binding methyltransferase superfamily. rRNA adenine N(6)-methyltransferase family. RsmA subfamily.

It localises to the cytoplasm. It carries out the reaction adenosine(1518)/adenosine(1519) in 16S rRNA + 4 S-adenosyl-L-methionine = N(6)-dimethyladenosine(1518)/N(6)-dimethyladenosine(1519) in 16S rRNA + 4 S-adenosyl-L-homocysteine + 4 H(+). Its function is as follows. Specifically dimethylates two adjacent adenosines (A1518 and A1519) in the loop of a conserved hairpin near the 3'-end of 16S rRNA in the 30S particle. May play a critical role in biogenesis of 30S subunits. The sequence is that of Ribosomal RNA small subunit methyltransferase A from Flavobacterium johnsoniae (strain ATCC 17061 / DSM 2064 / JCM 8514 / BCRC 14874 / CCUG 350202 / NBRC 14942 / NCIMB 11054 / UW101) (Cytophaga johnsonae).